We begin with the raw amino-acid sequence, 283 residues long: Pantothenate synthetase (283 aa).

Position 30-37 (30-37) interacts with ATP; the sequence is MGYYHAGH. Histidine 37 (proton donor) is an active-site residue. (R)-pantoate is bound at residue glutamine 61. Beta-alanine is bound at residue glutamine 61. 147 to 150 serves as a coordination point for ATP; it reads GQKD. Glutamine 153 lines the (R)-pantoate pocket. ATP is bound by residues valine 176 and 184 to 187; that span reads MSSR.

The protein belongs to the pantothenate synthetase family. In terms of assembly, homodimer.

The protein localises to the cytoplasm. It carries out the reaction (R)-pantoate + beta-alanine + ATP = (R)-pantothenate + AMP + diphosphate + H(+). Its pathway is cofactor biosynthesis; (R)-pantothenate biosynthesis; (R)-pantothenate from (R)-pantoate and beta-alanine: step 1/1. Functionally, catalyzes the condensation of pantoate with beta-alanine in an ATP-dependent reaction via a pantoyl-adenylate intermediate. This is Pantothenate synthetase from Nitratidesulfovibrio vulgaris (strain ATCC 29579 / DSM 644 / CCUG 34227 / NCIMB 8303 / VKM B-1760 / Hildenborough) (Desulfovibrio vulgaris).